The chain runs to 321 residues: Malate dehydrogenase (321 aa).

NAD(+) is bound by residues 10–15 (GAGQIG) and D34. Substrate-binding residues include R83 and R89. NAD(+) is bound by residues N96 and 119–121 (ITN). Substrate contacts are provided by N121 and R152. Residue H176 is the Proton acceptor of the active site.

The protein belongs to the LDH/MDH superfamily. MDH type 3 family.

The enzyme catalyses (S)-malate + NAD(+) = oxaloacetate + NADH + H(+). Functionally, catalyzes the reversible oxidation of malate to oxaloacetate. The polypeptide is Malate dehydrogenase (Xanthobacter autotrophicus (strain ATCC BAA-1158 / Py2)).